A 358-amino-acid chain; its full sequence is UDP-N-acetylglucosamine--N-acetylmuramyl-(pentapeptide) pyrophosphoryl-undecaprenol N-acetylglucosamine transferase (358 aa).

UDP-N-acetyl-alpha-D-glucosamine contacts are provided by residues 11–13 (TGG), R163, S191, I245, and Q290.

This sequence belongs to the glycosyltransferase 28 family. MurG subfamily.

Its subcellular location is the cell inner membrane. It catalyses the reaction di-trans,octa-cis-undecaprenyl diphospho-N-acetyl-alpha-D-muramoyl-L-alanyl-D-glutamyl-meso-2,6-diaminopimeloyl-D-alanyl-D-alanine + UDP-N-acetyl-alpha-D-glucosamine = di-trans,octa-cis-undecaprenyl diphospho-[N-acetyl-alpha-D-glucosaminyl-(1-&gt;4)]-N-acetyl-alpha-D-muramoyl-L-alanyl-D-glutamyl-meso-2,6-diaminopimeloyl-D-alanyl-D-alanine + UDP + H(+). It participates in cell wall biogenesis; peptidoglycan biosynthesis. Functionally, cell wall formation. Catalyzes the transfer of a GlcNAc subunit on undecaprenyl-pyrophosphoryl-MurNAc-pentapeptide (lipid intermediate I) to form undecaprenyl-pyrophosphoryl-MurNAc-(pentapeptide)GlcNAc (lipid intermediate II). This chain is UDP-N-acetylglucosamine--N-acetylmuramyl-(pentapeptide) pyrophosphoryl-undecaprenol N-acetylglucosamine transferase, found in Herminiimonas arsenicoxydans.